The chain runs to 450 residues: UDP-N-acetylmuramoylalanine--D-glutamate ligase (450 aa).

ATP is bound at residue 119-125; that stretch reads GSNGKTT.

Belongs to the MurCDEF family.

The protein localises to the cytoplasm. It carries out the reaction UDP-N-acetyl-alpha-D-muramoyl-L-alanine + D-glutamate + ATP = UDP-N-acetyl-alpha-D-muramoyl-L-alanyl-D-glutamate + ADP + phosphate + H(+). It functions in the pathway cell wall biogenesis; peptidoglycan biosynthesis. Cell wall formation. Catalyzes the addition of glutamate to the nucleotide precursor UDP-N-acetylmuramoyl-L-alanine (UMA). This Streptococcus pneumoniae (strain ATCC BAA-255 / R6) protein is UDP-N-acetylmuramoylalanine--D-glutamate ligase.